We begin with the raw amino-acid sequence, 426 residues long: tRNA(Met) cytidine acetate ligase (426 aa).

ATP contacts are provided by residues 7–20, Gly-101, Asn-168, and Arg-193; that span reads VVEYNPFHNGHLFH.

The protein belongs to the TmcAL family.

Its subcellular location is the cytoplasm. It catalyses the reaction cytidine(34) in elongator tRNA(Met) + acetate + ATP = N(4)-acetylcytidine(34) in elongator tRNA(Met) + AMP + diphosphate. In terms of biological role, catalyzes the formation of N(4)-acetylcytidine (ac(4)C) at the wobble position of elongator tRNA(Met), using acetate and ATP as substrates. First activates an acetate ion to form acetyladenylate (Ac-AMP) and then transfers the acetyl group to tRNA to form ac(4)C34. In Kosmotoga olearia (strain ATCC BAA-1733 / DSM 21960 / TBF 19.5.1), this protein is tRNA(Met) cytidine acetate ligase.